The chain runs to 316 residues: UPF0613 protein PB24D3.06c (316 aa).

Belongs to the UPF0613 family.

Its subcellular location is the cytoplasm. The protein localises to the nucleus. This Schizosaccharomyces pombe (strain 972 / ATCC 24843) (Fission yeast) protein is UPF0613 protein PB24D3.06c.